A 616-amino-acid polypeptide reads, in one-letter code: Homeodomain-interacting protein kinase 4 (616 aa).

The Protein kinase domain occupies Tyr-11 to Val-347. Residues Leu-17–Val-25 and Lys-40 contribute to the ATP site. Catalysis depends on Asp-136, which acts as the Proton acceptor. Positions His-486–His-616 are disordered. A compositionally biased stretch (polar residues) spans Lys-496–Ser-511. Ser-511 bears the Phosphoserine mark.

This sequence belongs to the protein kinase superfamily. CMGC Ser/Thr protein kinase family. HIPK subfamily. Post-translationally, autophosphorylated.

It is found in the cytoplasm. The catalysed reaction is L-seryl-[protein] + ATP = O-phospho-L-seryl-[protein] + ADP + H(+). The enzyme catalyses L-threonyl-[protein] + ATP = O-phospho-L-threonyl-[protein] + ADP + H(+). In terms of biological role, protein kinase that phosphorylates human TP53 at Ser-9, and thus induces TP53 repression of BIRC5 promoter. May act as a corepressor of transcription factors (Potential). The protein is Homeodomain-interacting protein kinase 4 (HIPK4) of Homo sapiens (Human).